Reading from the N-terminus, the 353-residue chain is Sorbitol dehydrogenase (353 aa).

A Zn(2+)-binding site is contributed by cysteine 45. Substrate is bound at residue tyrosine 51. Residues histidine 70 and glutamate 71 each contribute to the Zn(2+) site. Residue glutamate 156 participates in substrate binding. NAD(+)-binding positions include valine 184, aspartate 204, arginine 209, 271–273 (VGL), and 296–298 (IFR). Arginine 298 and tyrosine 299 together coordinate substrate.

It belongs to the zinc-containing alcohol dehydrogenase family. In terms of assembly, homotetramer. Requires Zn(2+) as cofactor.

It carries out the reaction keto-D-fructose + NADH + H(+) = D-sorbitol + NAD(+). The catalysed reaction is xylitol + NAD(+) = D-xylulose + NADH + H(+). It catalyses the reaction L-iditol + NAD(+) = keto-L-sorbose + NADH + H(+). Functionally, polyol dehydrogenase that catalyzes the NAD(+)-dependent oxidation of various sugar alcohols. Is mostly active with D-sorbitol (D-glucitol), xylitol and L-iditol as substrates, leading to the C2-oxidized products D-fructose, D-xylulose and L-sorbose, respectively. In Bacillus subtilis (strain 168), this protein is Sorbitol dehydrogenase.